Here is a 1358-residue protein sequence, read N- to C-terminus: Nonribosomal peptide synthetase rstn8 (1358 aa).

The interval 1-23 (MSHSSHYSPVDSGMVPSSSSTED) is disordered. Residues 261–659 (YRELDRLSSR…LGEVEYRLHQ (399 aa)) are adenylation. The 78-residue stretch at 795-872 (ETVSPAESTL…DQASLVRPLV (78 aa)) folds into the Carrier domain. Residue S832 is modified to O-(pantetheine 4'-phosphoryl)serine. Residues 909 to 1322 (EDIYPCTPLQ…DDYSQALHEL (414 aa)) form a condensation region.

Belongs to the NRP synthetase family. It depends on pantetheine 4'-phosphate as a cofactor.

The catalysed reaction is restrictinol + glycine + H(+) = restricticin + H2O. The protein operates within antifungal biosynthesis. Functionally, nonribosomal peptide synthetase; part of the gene cluster that mediates the biosynthesis of the tetrahydropyranyl antifungal agent restricticin that acts as an inhibitor of CYP51 and blocks the ergosterol biosynthesis. Within the pathway, rstn8 catalyzes the C3 esterification of restrictinol with glycine to yield restricticin. Rstn8 represents an example of the emerging class of single-module NRPS-like enzymes that perform esterification reactions. Rstn8 displays strict substrate specificity toward glycine as no other natural amino acid is accepted. Rstn8 does not recognize desmethylrestrictinol as a substrate, demonstrating that rstn1-catalyzed methylation, possibly protecting the C4-OH, must precede the final esterification step. The highly reducing polyketide synthase rstn3, the short chain dehydrogenase rstn4, the cyclase rstn5, the FAD-dependent monooxygenase rstn6 and the enoylreductase rstn7 are required to generate the first stable intermediate desmethylrestrictinol. Rstn3 with rstn7 biosynthesize the first polyketide chain intermediate that is reduced by rstn4, followed by epoxidation by rstn6 before 6-endo cyclization via epoxide opening by rstn5 leads to desmethylrestrictinol. The methyltransferase rstn1 then catalyzes the C4 O-methylation of desmethylrestrictinol to produce restrictinol, and the nonribosomal peptide synthetase rstn8 catalyzes the C3 esterification of restrictinol with glycine that leads to restricticin. This is Nonribosomal peptide synthetase rstn8 from Aspergillus nomiae NRRL (strain ATCC 15546 / NRRL 13137 / CBS 260.88 / M93).